Reading from the N-terminus, the 80-residue chain is Bacteriochlorophyll c-binding protein (80 aa).

Histidine 25 lines the a bacteriochlorophyll c pocket. The tract at residues 49–80 (PGVSRSGSGEGAFSSSPSNGFRPKRIRSRFNR) is disordered. Residues 54–80 (SGSGEGAFSSSPSNGFRPKRIRSRFNR) constitute a propeptide that is removed on maturation. Positions 70–80 (RPKRIRSRFNR) are enriched in basic residues.

This sequence belongs to the BChl C/E-binding protein family.

It is found in the chlorosome. Its subcellular location is the chlorosome envelope. Component of the photosynthetic apparatus. The light harvesting B740 complex binds bacteriochlorophyll c. This Chloroflexus aurantiacus (strain ATCC 29366 / DSM 635 / J-10-fl) protein is Bacteriochlorophyll c-binding protein (cmsA).